The primary structure comprises 218 residues: Mitochondrial import inner membrane translocase subunit TIM17-1 (218 aa).

4 consecutive transmembrane segments (helical) span residues 19–36 (VGGAFAMGAVGGSAYHLI), 66–82 (FSVWGGLYSTFDCALVY), 89–105 (PWNSILSGAATGGFLSL), and 116–133 (ALVGGVLLAMIEGVGIML).

This sequence belongs to the Tim17/Tim22/Tim23 family. In terms of assembly, component of the TIM17:23 complex at least composed of TIM23, TIM17 and TIM50. The complex interacts with the TIM44 component of the PAM complex. As to expression, expressed in flowers, leaves and cotyledons, and at very low levels in roots.

It localises to the mitochondrion inner membrane. In terms of biological role, essential component of the TIM17:23 complex, a complex that mediates the translocation of transit peptide-containing proteins across the mitochondrial inner membrane. Links the inner and outer membranes. This is Mitochondrial import inner membrane translocase subunit TIM17-1 (TIM17-1) from Arabidopsis thaliana (Mouse-ear cress).